The sequence spans 151 residues: uncharacterized protein (151 aa).

In terms of domain architecture, Nudix hydrolase spans 6–143 (MKTLSAGIIF…QWQYVMGPSL (138 aa)).

This is an uncharacterized protein from Escherichia coli (Bacteriophage T4).